We begin with the raw amino-acid sequence, 637 residues long: Chaperone protein DnaK (637 aa).

Residue T198 is modified to Phosphothreonine; by autocatalysis. Residues M597–K637 form a disordered region. Over residues P608–P621 the composition is skewed to gly residues. A compositionally biased stretch (acidic residues) spans D627 to K637.

Belongs to the heat shock protein 70 family.

Functionally, acts as a chaperone. The protein is Chaperone protein DnaK of Syntrophus aciditrophicus (strain SB).